Consider the following 242-residue polypeptide: Pyridoxine 5'-phosphate synthase (242 aa).

Asn6 is a binding site for 3-amino-2-oxopropyl phosphate. 8–9 (DH) provides a ligand contact to 1-deoxy-D-xylulose 5-phosphate. Arg17 is a 3-amino-2-oxopropyl phosphate binding site. His42 serves as the catalytic Proton acceptor. Residues Arg44 and His49 each coordinate 1-deoxy-D-xylulose 5-phosphate. Residue Glu69 is the Proton acceptor of the active site. Thr99 contacts 1-deoxy-D-xylulose 5-phosphate. Catalysis depends on His190, which acts as the Proton donor. Residues Gly191 and 212-213 (GH) contribute to the 3-amino-2-oxopropyl phosphate site.

This sequence belongs to the PNP synthase family. As to quaternary structure, homooctamer; tetramer of dimers.

The protein localises to the cytoplasm. The catalysed reaction is 3-amino-2-oxopropyl phosphate + 1-deoxy-D-xylulose 5-phosphate = pyridoxine 5'-phosphate + phosphate + 2 H2O + H(+). It functions in the pathway cofactor biosynthesis; pyridoxine 5'-phosphate biosynthesis; pyridoxine 5'-phosphate from D-erythrose 4-phosphate: step 5/5. Its function is as follows. Catalyzes the complicated ring closure reaction between the two acyclic compounds 1-deoxy-D-xylulose-5-phosphate (DXP) and 3-amino-2-oxopropyl phosphate (1-amino-acetone-3-phosphate or AAP) to form pyridoxine 5'-phosphate (PNP) and inorganic phosphate. The chain is Pyridoxine 5'-phosphate synthase from Neisseria meningitidis serogroup C.